The primary structure comprises 151 residues: 3-hydroxyacyl-thioester dehydratase Z (151 aa).

Positions 11-131 (AAAAGEKVGQ…TVQATVSTTV (121 aa)) constitute a MaoC-like domain. Substrate contacts are provided by residues 60 to 63 (IAHG), 86 to 89 (AINY), 97 to 99 (PAP), Gln124, and Arg148.

This sequence belongs to the enoyl-CoA hydratase/isomerase family. In terms of assembly, homodimer.

It carries out the reaction a (3R)-3-hydroxyacyl-CoA = a (2E)-enoyl-CoA + H2O. Its function is as follows. Shows trans-enoyl-CoA hydratase/3-hydroxyacyl-CoA dehydratase activity. In Mycobacterium bovis (strain ATCC BAA-935 / AF2122/97), this protein is 3-hydroxyacyl-thioester dehydratase Z.